A 393-amino-acid chain; its full sequence is Acetate kinase (393 aa).

Asparagine 7 provides a ligand contact to Mg(2+). Position 14 (lysine 14) interacts with ATP. Substrate is bound at residue arginine 89. The active-site Proton donor/acceptor is aspartate 146. Residues 204–208 (HIGNG), 279–281 (DSR), and 327–331 (GIGEN) each bind ATP. Glutamate 379 contributes to the Mg(2+) binding site.

Belongs to the acetokinase family. In terms of assembly, homodimer. It depends on Mg(2+) as a cofactor. The cofactor is Mn(2+).

It is found in the cytoplasm. It catalyses the reaction acetate + ATP = acetyl phosphate + ADP. Its pathway is metabolic intermediate biosynthesis; acetyl-CoA biosynthesis; acetyl-CoA from acetate: step 1/2. Its function is as follows. Catalyzes the formation of acetyl phosphate from acetate and ATP. Can also catalyze the reverse reaction. The protein is Acetate kinase of Acholeplasma laidlawii (strain PG-8A).